A 98-amino-acid chain; its full sequence is NADH-ubiquinone oxidoreductase chain 4L (98 aa).

Transmembrane regions (helical) follow at residues 1–21 (MMPI…GALV), 28–48 (STLL…ALLI), and 59–79 (APLI…ALLV).

Belongs to the complex I subunit 4L family. In terms of assembly, core subunit of respiratory chain NADH dehydrogenase (Complex I) which is composed of 45 different subunits.

It is found in the mitochondrion inner membrane. The enzyme catalyses a ubiquinone + NADH + 5 H(+)(in) = a ubiquinol + NAD(+) + 4 H(+)(out). Functionally, core subunit of the mitochondrial membrane respiratory chain NADH dehydrogenase (Complex I) which catalyzes electron transfer from NADH through the respiratory chain, using ubiquinone as an electron acceptor. Part of the enzyme membrane arm which is embedded in the lipid bilayer and involved in proton translocation. The chain is NADH-ubiquinone oxidoreductase chain 4L (MT-ND4L) from Distoechurus pennatus (Feather-tailed possum).